The chain runs to 127 residues: MKRIFLSAKLHKVTTTAVELNYEGSCEIDGVLLDAAGIGAFEQIQIYNINNGNRFTTYTILGKDNSGIISVNGAAARKVNVGDVLIIAAYALYSEEELEGYAPRLCYVNNKNILTKISTGSKKSSLY.

Ser-25 (schiff-base intermediate with substrate; via pyruvic acid) is an active-site residue. The residue at position 25 (Ser-25) is a Pyruvic acid (Ser). Residue Thr-57 participates in substrate binding. Tyr-58 (proton donor) is an active-site residue. Position 73–75 (73–75 (GAA)) interacts with substrate.

It belongs to the PanD family. In terms of assembly, heterooctamer of four alpha and four beta subunits. It depends on pyruvate as a cofactor. In terms of processing, is synthesized initially as an inactive proenzyme, which is activated by self-cleavage at a specific serine bond to produce a beta-subunit with a hydroxyl group at its C-terminus and an alpha-subunit with a pyruvoyl group at its N-terminus.

Its subcellular location is the cytoplasm. It carries out the reaction L-aspartate + H(+) = beta-alanine + CO2. The protein operates within cofactor biosynthesis; (R)-pantothenate biosynthesis; beta-alanine from L-aspartate: step 1/1. Catalyzes the pyruvoyl-dependent decarboxylation of aspartate to produce beta-alanine. The protein is Aspartate 1-decarboxylase of Vesicomyosocius okutanii subsp. Calyptogena okutanii (strain HA).